The sequence spans 345 residues: Uroporphyrinogen decarboxylase (345 aa).

Substrate is bound by residues 24–28 (RQAGR), Asp-74, Tyr-150, Ser-205, and His-318.

It belongs to the uroporphyrinogen decarboxylase family. Homodimer.

It localises to the cytoplasm. It carries out the reaction uroporphyrinogen III + 4 H(+) = coproporphyrinogen III + 4 CO2. It participates in porphyrin-containing compound metabolism; protoporphyrin-IX biosynthesis; coproporphyrinogen-III from 5-aminolevulinate: step 4/4. Its function is as follows. Catalyzes the decarboxylation of four acetate groups of uroporphyrinogen-III to yield coproporphyrinogen-III. This is Uroporphyrinogen decarboxylase from Dichelobacter nodosus (strain VCS1703A).